We begin with the raw amino-acid sequence, 508 residues long: Probable monogalactosyldiacylglycerol synthase 3, chloroplastic (508 aa).

The N-terminal 60 residues, 1–60, are a transit peptide targeting the chloroplast; sequence MAASSSSSSSMASPRGRSIRETVLETVAAYHQQQRMRRKFRKSLSYAGELSSAGRARGEG. A disordered region spans residues 51–79; that stretch reads SSAGRARGEGGASSSASTTSLCGPDEDDE.

It belongs to the glycosyltransferase 28 family.

Its subcellular location is the plastid. It is found in the chloroplast membrane. It catalyses the reaction a 1,2-diacyl-sn-glycerol + UDP-alpha-D-galactose = a 1,2-diacyl-3-O-(beta-D-galactosyl)-sn-glycerol + UDP + H(+). Functionally, involved in the synthesis of the major structural component of photosynthetic membranes. This is Probable monogalactosyldiacylglycerol synthase 3, chloroplastic (MGD3) from Oryza sativa subsp. japonica (Rice).